Consider the following 239-residue polypeptide: Ribonuclease PH (239 aa).

Phosphate-binding positions include arginine 86 and 124 to 126; that span reads GTR.

This sequence belongs to the RNase PH family. In terms of assembly, homohexameric ring arranged as a trimer of dimers.

It catalyses the reaction tRNA(n+1) + phosphate = tRNA(n) + a ribonucleoside 5'-diphosphate. Its function is as follows. Phosphorolytic 3'-5' exoribonuclease that plays an important role in tRNA 3'-end maturation. Removes nucleotide residues following the 3'-CCA terminus of tRNAs; can also add nucleotides to the ends of RNA molecules by using nucleoside diphosphates as substrates, but this may not be physiologically important. Probably plays a role in initiation of 16S rRNA degradation (leading to ribosome degradation) during starvation. This is Ribonuclease PH from Rhizobium etli (strain CIAT 652).